Reading from the N-terminus, the 254-residue chain is 3-dehydroquinate dehydratase (254 aa).

3-dehydroquinate is bound by residues 47–49 and R83; that span reads EWR. H144 acts as the Proton donor/acceptor in catalysis. K171 functions as the Schiff-base intermediate with substrate in the catalytic mechanism. The 3-dehydroquinate site is built by R214, S233, and Q237.

The protein belongs to the type-I 3-dehydroquinase family. Homodimer.

The enzyme catalyses 3-dehydroquinate = 3-dehydroshikimate + H2O. It functions in the pathway metabolic intermediate biosynthesis; chorismate biosynthesis; chorismate from D-erythrose 4-phosphate and phosphoenolpyruvate: step 3/7. In terms of biological role, involved in the third step of the chorismate pathway, which leads to the biosynthesis of aromatic amino acids. Catalyzes the cis-dehydration of 3-dehydroquinate (DHQ) and introduces the first double bond of the aromatic ring to yield 3-dehydroshikimate. This is 3-dehydroquinate dehydratase from Clostridium botulinum (strain Eklund 17B / Type B).